We begin with the raw amino-acid sequence, 118 residues long: Holo-[acyl-carrier-protein] synthase (118 aa).

Asp8 and Glu58 together coordinate Mg(2+).

Belongs to the P-Pant transferase superfamily. AcpS family. Requires Mg(2+) as cofactor.

It is found in the cytoplasm. It catalyses the reaction apo-[ACP] + CoA = holo-[ACP] + adenosine 3',5'-bisphosphate + H(+). In terms of biological role, transfers the 4'-phosphopantetheine moiety from coenzyme A to a Ser of acyl-carrier-protein. This is Holo-[acyl-carrier-protein] synthase from Listeria innocua serovar 6a (strain ATCC BAA-680 / CLIP 11262).